The chain runs to 445 residues: 3-phosphoshikimate 1-carboxyvinyltransferase (445 aa).

The tract at residues 1–25 is disordered; that stretch reads MSGHGPAQPMTARRSGPLKGRAEIP. 3-phosphoshikimate contacts are provided by Lys28, Ser29, and Arg33. Lys28 lines the phosphoenolpyruvate pocket. Gly101 and Arg129 together coordinate phosphoenolpyruvate. 3-phosphoshikimate-binding residues include Ser174, Gln176, Asp326, and Lys353. Gln176 is a binding site for phosphoenolpyruvate. Asp326 functions as the Proton acceptor in the catalytic mechanism. 2 residues coordinate phosphoenolpyruvate: Arg357 and Arg400.

The protein belongs to the EPSP synthase family. As to quaternary structure, monomer.

The protein localises to the cytoplasm. It catalyses the reaction 3-phosphoshikimate + phosphoenolpyruvate = 5-O-(1-carboxyvinyl)-3-phosphoshikimate + phosphate. The protein operates within metabolic intermediate biosynthesis; chorismate biosynthesis; chorismate from D-erythrose 4-phosphate and phosphoenolpyruvate: step 6/7. In terms of biological role, catalyzes the transfer of the enolpyruvyl moiety of phosphoenolpyruvate (PEP) to the 5-hydroxyl of shikimate-3-phosphate (S3P) to produce enolpyruvyl shikimate-3-phosphate and inorganic phosphate. The polypeptide is 3-phosphoshikimate 1-carboxyvinyltransferase (Cereibacter sphaeroides (strain ATCC 17029 / ATH 2.4.9) (Rhodobacter sphaeroides)).